An 83-amino-acid polypeptide reads, in one-letter code: Exodeoxyribonuclease 7 small subunit (83 aa).

This sequence belongs to the XseB family. Heterooligomer composed of large and small subunits.

The protein resides in the cytoplasm. It carries out the reaction Exonucleolytic cleavage in either 5'- to 3'- or 3'- to 5'-direction to yield nucleoside 5'-phosphates.. Functionally, bidirectionally degrades single-stranded DNA into large acid-insoluble oligonucleotides, which are then degraded further into small acid-soluble oligonucleotides. This Rhodopseudomonas palustris (strain HaA2) protein is Exodeoxyribonuclease 7 small subunit.